A 147-amino-acid chain; its full sequence is Receptor activity-modifying protein 3 (147 aa).

Positions 1–22 (MATPAQRLHLLPLLLLLCGECA) are cleaved as a signal peptide. The Extracellular segment spans residues 23-112 (QVCGCNETGM…CTVDRTHWED (90 aa)). 4 N-linked (GlcNAc...) asparagine glycosylation sites follow: N28, N57, N70, and N102. Disulfide bonds link C39–C71 and C56–C103. Residues 113–137 (PPDEVLIPLIAVPVLLTVAMAGLVV) form a helical membrane-spanning segment. Residues 138–147 (WRSKRTDRLL) are Cytoplasmic-facing.

The protein belongs to the RAMP family. Heterodimer of CALCRL and RAMP3; interaction induces allosteric modulation of CALCRL function and ligand specificity for adrenomedullin/ADM and intermedin/ADM2. Heterodimer of CALCR and RAMP3; interaction form the receptor complex AMYR3 for amylin/IAPP. Interacts with GPER1.

The protein resides in the cell membrane. Its subcellular location is the membrane. Functionally, accessory protein that interacts with and modulates the function of G-protein coupled receptors including calcitonin gene-related peptide type 1 receptor (CALCRL), calcitonin receptor (CALCR) and G-protein coupled estrogen receptor 1 (GPER1). Required for the transport of CALCRL and GPER1 receptors to the plasma membrane. Plays a role in cardioprotection by reducing cardiac hypertrophy and perivascular fibrosis in a GPER1-dependent manner. Together with CALCRL, form a receptor complex for adrenomedullin/ADM and intermedin/ADM2. Together with CALCR, act as a receptor complex for amylin/IAPP. The protein is Receptor activity-modifying protein 3 of Rattus norvegicus (Rat).